Reading from the N-terminus, the 482-residue chain is tRNA sulfurtransferase (482 aa).

The 105-residue stretch at 61–165 folds into the THUMP domain; that stretch reads SAIRDALTRI…QDRLLLIKGR (105 aa). Residues 183–184, Lys265, Gly287, and Gln296 each bind ATP; that span reads LI. Cysteines 344 and 456 form a disulfide. Residues 404 to 482 enclose the Rhodanese domain; the sequence is FAPTDVLLDI…GFSNVKVYRP (79 aa). Catalysis depends on Cys456, which acts as the Cysteine persulfide intermediate.

This sequence belongs to the ThiI family.

The protein resides in the cytoplasm. The enzyme catalyses [ThiI sulfur-carrier protein]-S-sulfanyl-L-cysteine + a uridine in tRNA + 2 reduced [2Fe-2S]-[ferredoxin] + ATP + H(+) = [ThiI sulfur-carrier protein]-L-cysteine + a 4-thiouridine in tRNA + 2 oxidized [2Fe-2S]-[ferredoxin] + AMP + diphosphate. It carries out the reaction [ThiS sulfur-carrier protein]-C-terminal Gly-Gly-AMP + S-sulfanyl-L-cysteinyl-[cysteine desulfurase] + AH2 = [ThiS sulfur-carrier protein]-C-terminal-Gly-aminoethanethioate + L-cysteinyl-[cysteine desulfurase] + A + AMP + 2 H(+). It participates in cofactor biosynthesis; thiamine diphosphate biosynthesis. In terms of biological role, catalyzes the ATP-dependent transfer of a sulfur to tRNA to produce 4-thiouridine in position 8 of tRNAs, which functions as a near-UV photosensor. Also catalyzes the transfer of sulfur to the sulfur carrier protein ThiS, forming ThiS-thiocarboxylate. This is a step in the synthesis of thiazole, in the thiamine biosynthesis pathway. The sulfur is donated as persulfide by IscS. The sequence is that of tRNA sulfurtransferase from Pectobacterium carotovorum subsp. carotovorum (strain PC1).